Here is a 101-residue protein sequence, read N- to C-terminus: Small ribosomal subunit protein uS10 (101 aa).

This sequence belongs to the universal ribosomal protein uS10 family. As to quaternary structure, part of the 30S ribosomal subunit.

Functionally, involved in the binding of tRNA to the ribosomes. This chain is Small ribosomal subunit protein uS10, found in Bacteroides fragilis (strain ATCC 25285 / DSM 2151 / CCUG 4856 / JCM 11019 / LMG 10263 / NCTC 9343 / Onslow / VPI 2553 / EN-2).